Here is an 81-residue protein sequence, read N- to C-terminus: Large ribosomal subunit protein eL31 (81 aa).

This sequence belongs to the eukaryotic ribosomal protein eL31 family.

This Methanothermobacter thermautotrophicus (strain ATCC 29096 / DSM 1053 / JCM 10044 / NBRC 100330 / Delta H) (Methanobacterium thermoautotrophicum) protein is Large ribosomal subunit protein eL31 (rpl31e).